The primary structure comprises 115 residues: uncharacterized protein (115 aa).

Transmembrane regions (helical) follow at residues 1 to 21 (MFLA…FGSW), 33 to 53 (ALAL…LAAG), and 54 to 74 (GVVA…VCIA).

This sequence to M.leprae ML0030.

The protein localises to the cell membrane. This is an uncharacterized protein from Mycobacterium tuberculosis (strain CDC 1551 / Oshkosh).